A 428-amino-acid polypeptide reads, in one-letter code: D-amino acid dehydrogenase (428 aa).

3–17 serves as a coordination point for FAD; the sequence is VVILGSGVVGVASAY.

Belongs to the DadA oxidoreductase family. The cofactor is FAD.

The catalysed reaction is a D-alpha-amino acid + A + H2O = a 2-oxocarboxylate + AH2 + NH4(+). The protein operates within amino-acid degradation; D-alanine degradation; NH(3) and pyruvate from D-alanine: step 1/1. Its function is as follows. Oxidative deamination of D-amino acids. The polypeptide is D-amino acid dehydrogenase (Burkholderia lata (strain ATCC 17760 / DSM 23089 / LMG 22485 / NCIMB 9086 / R18194 / 383)).